Consider the following 478-residue polypeptide: MTTTVETAVATGRVARVIGPVVDVEFPVDAMPDMYNALHVEVADPANAGEKKTLTLEVAQHLGDGLVRTISMQPTDGLVRQAAVTDTGTGITVPVGDFTKGKVFNTLGEVLNVDEKYDGERWSIHRKAPRFDELESKTEMFETGVKVIDLLTPYVKGGKIGLFGGAGVGKTVLIQEMIYRVANNHDGVSVFAGVGERTREGNDLIEEMSDSGVIDKTALVFGQMDEPPGTRLRVALAGLTMAEYFRDVQKQDVLFFIDNIFRFTQAGSEVSTLLGRMPSAVGYQPNLADEMGLLQERITSTRGHSITSMQAIYVPADDLTDPAPATTFAHLDATTVLSRPISEKGIYPAVDPLDSTSRILDPRYIAQDHYDAAMRVKTVLQKYKDLQDIIAILGIDELGEEDKLVVHRARRVERFLSQNTHVAKQFTGVDGSDVPLDESITAFNAIIDGEYDHFPEQAFFMCGGIEDLKANAKELGVS.

An ATP-binding site is contributed by 164 to 171; it reads GGAGVGKT.

The protein belongs to the ATPase alpha/beta chains family. F-type ATPases have 2 components, CF(1) - the catalytic core - and CF(0) - the membrane proton channel. CF(1) has five subunits: alpha(3), beta(3), gamma(1), delta(1), epsilon(1). CF(0) has three main subunits: a(1), b(2) and c(9-12). The alpha and beta chains form an alternating ring which encloses part of the gamma chain. CF(1) is attached to CF(0) by a central stalk formed by the gamma and epsilon chains, while a peripheral stalk is formed by the delta and b chains.

Its subcellular location is the cell membrane. The catalysed reaction is ATP + H2O + 4 H(+)(in) = ADP + phosphate + 5 H(+)(out). Its function is as follows. Produces ATP from ADP in the presence of a proton gradient across the membrane. The catalytic sites are hosted primarily by the beta subunits. In Streptomyces avermitilis (strain ATCC 31267 / DSM 46492 / JCM 5070 / NBRC 14893 / NCIMB 12804 / NRRL 8165 / MA-4680), this protein is ATP synthase subunit beta.